The chain runs to 495 residues: Protein painting of fourth (495 aa).

The disordered stretch occupies residues 1–51; it reads MDSKRAALESGDGPDAKRLDTTDDQDKEASGGDGSQVMLAKHVAPYTGHGC. In terms of domain architecture, RRM spans 215–289; the sequence is CSLYVGNIPF…RTLTVRYRRL (75 aa). Over residues 332 to 342 the composition is skewed to low complexity; sequence ISDSDNCSDSS. 3 disordered regions span residues 332–358, 432–451, and 461–495; these read ISDS…INEQ, PVPA…KKAK, and GPFR…DPDP. Positions 345–358 are enriched in basic and acidic residues; that stretch reads GKEDGKRKKKINEQ. The Bipartite nuclear localization signal motif lies at 351–367; sequence RKKKINEQEREIEKLKR. Residues 472 to 495 show a composition bias toward basic and acidic residues; it reads TADEYEKDDRLEELYAQLERDPDP.

Interacts with Zeste. Weakly expressed in embryos. Expression increases during larval and pupal stages. In adults, it is predominantly expressed in males, while it is weakly expressed in females.

The protein resides in the nucleus. It localises to the chromosome. Its function is as follows. Probable RNA-binding protein that specifically binds to the fourth chromosome and may bind an RNA that spreads the fourth chromosome. May be a reminiscence of X chromosome dosage compensation of ancestral Drosophila species in which the X and the fourth chromosomes are one single chromosome. The protein is Protein painting of fourth (Pof) of Drosophila melanogaster (Fruit fly).